The following is a 130-amino-acid chain: Small ribosomal subunit protein uS9 (130 aa).

This sequence belongs to the universal ribosomal protein uS9 family.

The protein is Small ribosomal subunit protein uS9 of Aromatoleum aromaticum (strain DSM 19018 / LMG 30748 / EbN1) (Azoarcus sp. (strain EbN1)).